The following is a 293-amino-acid chain: Protease HtpX homolog (293 aa).

Transmembrane regions (helical) follow at residues 6-26 (VAVM…LIGG) and 28-48 (SGMV…YWNS). His130 is a binding site for Zn(2+). Residue Glu131 is part of the active site. Position 134 (His134) interacts with Zn(2+). 2 helical membrane-spanning segments follow: residues 145–165 (LTAT…FFGG) and 172–192 (PLGA…AMMV). Glu201 is a binding site for Zn(2+).

The protein belongs to the peptidase M48B family. The cofactor is Zn(2+).

The protein resides in the cell inner membrane. This chain is Protease HtpX homolog, found in Rhodospirillum rubrum (strain ATCC 11170 / ATH 1.1.1 / DSM 467 / LMG 4362 / NCIMB 8255 / S1).